The sequence spans 123 residues: Methicillin resistance regulatory protein MecI (123 aa).

A DNA-binding region (H-T-H motif) is located at residues 7 to 71 (EISSAEWEFM…KDNKIFQYYS (65 aa)). The important for dimerization stretch occupies residues 74 to 123 (EESDIKYKTSKNFINKVYKGGFNSLVLNFVEKEDLSQDEIEELRNILNKK).

It belongs to the BlaI transcriptional regulatory family. Monomer and homodimer. Upon exposure to beta-lactams, proteolytic cleavage at a single site impairs dimerization and abolishes repressor activity.

The protein localises to the cytoplasm. Its function is as follows. Transcriptional repressor that constitutively blocks the transcription of the gene for the penicillin-binding protein MecA. Binds DNA as a dimer. This Staphylococcus aureus (strain Mu50 / ATCC 700699) protein is Methicillin resistance regulatory protein MecI (mecI).